The sequence spans 199 residues: N-(5'-phosphoribosyl)anthranilate isomerase (199 aa).

This sequence belongs to the TrpF family.

It carries out the reaction N-(5-phospho-beta-D-ribosyl)anthranilate = 1-(2-carboxyphenylamino)-1-deoxy-D-ribulose 5-phosphate. It participates in amino-acid biosynthesis; L-tryptophan biosynthesis; L-tryptophan from chorismate: step 3/5. This chain is N-(5'-phosphoribosyl)anthranilate isomerase, found in Streptococcus pneumoniae (strain Taiwan19F-14).